Reading from the N-terminus, the 156-residue chain is Endoribonuclease YbeY (156 aa).

Residues His122, His126, and His132 each coordinate Zn(2+).

This sequence belongs to the endoribonuclease YbeY family. Requires Zn(2+) as cofactor.

It localises to the cytoplasm. Single strand-specific metallo-endoribonuclease involved in late-stage 70S ribosome quality control and in maturation of the 3' terminus of the 16S rRNA. The protein is Endoribonuclease YbeY of Bacillus cereus (strain G9842).